We begin with the raw amino-acid sequence, 314 residues long: Ribonuclease Z (314 aa).

7 residues coordinate Zn(2+): His-62, His-64, Asp-66, His-67, His-139, Asp-210, and His-268. Asp-66 functions as the Proton acceptor in the catalytic mechanism.

It belongs to the RNase Z family. As to quaternary structure, homodimer. Zn(2+) serves as cofactor.

It catalyses the reaction Endonucleolytic cleavage of RNA, removing extra 3' nucleotides from tRNA precursor, generating 3' termini of tRNAs. A 3'-hydroxy group is left at the tRNA terminus and a 5'-phosphoryl group is left at the trailer molecule.. Zinc phosphodiesterase, which displays some tRNA 3'-processing endonuclease activity. Probably involved in tRNA maturation, by removing a 3'-trailer from precursor tRNA. The polypeptide is Ribonuclease Z (Acaryochloris marina (strain MBIC 11017)).